Consider the following 207-residue polypeptide: Peptidyl-tRNA hydrolase (207 aa).

Tyrosine 14 contributes to the tRNA binding site. Histidine 19 (proton acceptor) is an active-site residue. 3 residues coordinate tRNA: phenylalanine 68, asparagine 70, and asparagine 116.

Belongs to the PTH family. As to quaternary structure, monomer.

It localises to the cytoplasm. It catalyses the reaction an N-acyl-L-alpha-aminoacyl-tRNA + H2O = an N-acyl-L-amino acid + a tRNA + H(+). Hydrolyzes ribosome-free peptidyl-tRNAs (with 1 or more amino acids incorporated), which drop off the ribosome during protein synthesis, or as a result of ribosome stalling. Functionally, catalyzes the release of premature peptidyl moieties from peptidyl-tRNA molecules trapped in stalled 50S ribosomal subunits, and thus maintains levels of free tRNAs and 50S ribosomes. In Hyphomonas neptunium (strain ATCC 15444), this protein is Peptidyl-tRNA hydrolase.